The sequence spans 555 residues: Transmembrane protein 87B (555 aa).

Residues 1–42 form the signal peptide; sequence MAAACRSEAGLLPSLLCRRPAGAQLLRVALCLLCWVPAAVDA. Residues 43-216 are Lumenal-facing; sequence VPELGLWTRT…HGYISASDWP (174 aa). Asparagine 68, asparagine 160, and asparagine 198 each carry an N-linked (GlcNAc...) asparagine glycan. Residues 217–237 traverse the membrane as a helical segment; that stretch reads LMIFYMVMCIVYILYGVLWLL. Over 238–248 the chain is Cytoplasmic; it reads WSACYWKDILR. The chain crosses the membrane as a helical span at residues 249–269; sequence IQFWIAAVIFLGMLEKAVFYS. Residues 270–300 lie on the Lumenal side of the membrane; sequence EYQNINSTGLSTQGLLIFAELISAVKRTLAR. Asparagine 275 carries an N-linked (GlcNAc...) asparagine glycan. A helical transmembrane segment spans residues 301–321; the sequence is LLVIIVSLGYGIVKPRLGTVM. The Cytoplasmic segment spans residues 322–323; the sequence is HR. The chain crosses the membrane as a helical span at residues 324-344; the sequence is VIGLGLLYLIFAAIEGVMRVI. Over 345 to 351 the chain is Lumenal; the sequence is GGSKHLA. A helical transmembrane segment spans residues 352 to 372; it reads VVLTDIVLAVIDSIFVWFIFI. Residues 373–394 lie on the Cytoplasmic side of the membrane; it reads SLAQTMKTLRLRKNTVKFSLYR. The chain crosses the membrane as a helical span at residues 395–415; sequence HFTNTLIFAVLASIVFMVWTT. At 416-429 the chain is on the lumenal side; sequence KTFRIAKCQSDWME. Residues 430–450 form a helical membrane-spanning segment; it reads LWVDDAFWSFLFSVILIVIMF. Topologically, residues 451-555 are cytoplasmic; that stretch reads LWRPSANNQR…EKMFSSEKIM (105 aa). A phosphoserine mark is found at serine 470, serine 497, and serine 534.

The protein belongs to the LU7TM family. TMEM87 subfamily.

Its subcellular location is the golgi apparatus membrane. May be involved in retrograde transport from endosomes to the trans-Golgi network (TGN). This Mus musculus (Mouse) protein is Transmembrane protein 87B.